A 392-amino-acid polypeptide reads, in one-letter code: Alpha-(1,3)-fucosyltransferase fut-6 (392 aa).

Topologically, residues 1–12 (MSQIGGATCTWR) are cytoplasmic. A helical; Signal-anchor for type II membrane protein transmembrane segment spans residues 13–35 (YLGRFVTLGIYASVALFVWYTLV). Topologically, residues 36 to 392 (PTRSKHKDSI…CNNQIASKYL (357 aa)) are lumenal. N158 carries N-linked (GlcNAc...) asparagine glycosylation.

Belongs to the glycosyltransferase 10 family. Unlike other alpha-(1,3)-fucosyltransferases, appears not to require a divalent metal cation as cofactor. serves as cofactor.

It is found in the golgi apparatus. Its subcellular location is the golgi stack membrane. Its pathway is protein modification; protein glycosylation. Inhibited by divalent metal cations. In terms of biological role, involved in the fucosylation of N-glycans. Preferentially catalyzes the addition of fucose in alpha 1-3 linkage to the distal GlcNAc residue in N-glycans. Catalyzes the transfer of fucose to Gal-beta-1-4-GlcNAc-alpha-pNP (LN-pNP) and Gal-beta-1-4-GlcNAc-beta-1-3-Gal-beta-1-4-Glc (LNnT). Unlike alpha-(1,3)-fucosyltransferase fut-1, does not transfer fucose to Man-alpha-1-3-(Man-alpha-1-6)-Man-beta-1-4-GlcNAc-beta-1-4-GlcNAc-beta-1-Asn (M3), Man-alpha-1-3-(Man-alpha-1-6)-Man-beta-1-4-GlcNAc-beta-1-4-(Fuc-alpha-1-6)-GlcNAc-beta-1-Asn (M3F6) and GlcNAc-beta-1-2-Man-alpha-1-3-(GlcNAc-beta-1-2-Man-alpha-1-6)-Man-beta-1-4-GlcNAc-beta-1-4(Fuc-alpha-1-6)-GlcNAc-beta-1-Asn (GnM3F6). The polypeptide is Alpha-(1,3)-fucosyltransferase fut-6 (Caenorhabditis elegans).